The sequence spans 706 residues: MIQKMSPSLRRPSTRSSSGSSNIPQSPSVRSTSSFSNLTRNSIRSTSNSGSQSISASSTRSNSPLRSVSAKSDPFLHPGRIRIRRSDSINNNSRKNDTYTGSITVTIRPKPRSVGTSRDHVGLKSPRYSQPRSNSHHGSNTFVRDPWFITNDKTIVHEEIGEFKFDHVFASHCTNLEVYERTSKPMIDKLLMGFNATIFAYGMTGSGKTFTMSGNEQELGLIPLSVSYLFTNIMEQSMNGDKKFDVIISYLEIYNERIYDLLESGLEESGSRISTPSRLYMSKSNSNGLGVELKIRDDSQYGVKVIGLTERRCESSEELLRWIAVGDKSRKIGETDYNARSSRSHAIVLIRLTSTNVKNGTSRSSTLSLCDLAGSERATGQQERRKEGSFINKSLLALGTVISKLSADKMNSVGSNIPSPSASGSSSSSGNATNNGTSPSNHIPYRDSKLTRLLQPALSGDSIVTTICTVDTRNDAAAETMNTLRFASRAKNVALHVSKKSIISNGNNDGDKDRTIELLRRQLEEQRRMISELKNRSNIGEPLTKSSNESTYKDIKATGNDGDPNLALMRAENRVLKYKLENCEKLLDKDVVDLQDSEIMEIVEMLPFEVGTLLETKFQGLESQIRQYRKYTQKLEDKIMALEKSGHTAMSLTGCDGTEVIELQKMLERKDKMIEALQSAKRLRDRALKPLINTQQSPHPVVDNDK.

2 stretches are compositionally biased toward low complexity: residues 1–28 (MIQK…QSPS) and 36–63 (SNLT…RSNS). Residues 1–139 (MIQKMSPSLR…QPRSNSHHGS (139 aa)) are disordered. Residues 102–493 (SITVTIRPKP…LRFASRAKNV (392 aa)) enclose the Kinesin motor domain. Residues 127-139 (RYSQPRSNSHHGS) are compositionally biased toward polar residues. 202–209 (GMTGSGKT) lines the ATP pocket. Positions 413-445 (VGSNIPSPSASGSSSSSGNATNNGTSPSNHIPY) are disordered. Over residues 414–441 (GSNIPSPSASGSSSSSGNATNNGTSPSN) the composition is skewed to low complexity. 3 coiled-coil regions span residues 507–541 (NNDG…NIGE), 569–589 (MRAE…LLDK), and 612–689 (TLLE…RALK).

This sequence belongs to the TRAFAC class myosin-kinesin ATPase superfamily. Kinesin family. As to quaternary structure, might be dimeric.

It localises to the cytoplasm. Its subcellular location is the cytoskeleton. Its function is as follows. Required for assembly of the mitotic spindle. In Saccharomyces cerevisiae (strain ATCC 204508 / S288c) (Baker's yeast), this protein is Kinesin-like protein KIP2 (KIP2).